Consider the following 200-residue polypeptide: CASP-like protein 1D2 (200 aa).

The tract at residues 1-26 (MASTENPDPETGKSEPIPASATTPPP) is disordered. Residues 1-36 (MASTENPDPETGKSEPIPASATTPPPSAASFLDCRK) are Cytoplasmic-facing. The chain crosses the membrane as a helical span at residues 37–57 (IDVIIRVLLFSATLTALIVMV). The Extracellular portion of the chain corresponds to 58–85 (TSDQTEKTQLPGVSSPAPVSAEFNDSPA). A helical membrane pass occupies residues 86-106 (FIFFVVALVVTSFYALMSTLV). The Cytoplasmic portion of the chain corresponds to 107–129 (SISLLLKPEFTARVSVYLASLDM). The helical transmembrane segment at 130–150 (VMLGILASATGTAGGVAYIAL) threads the bilayer. Residues 151-171 (KGNKEVGWNKICNVYDKFCRY) are Extracellular-facing. A helical transmembrane segment spans residues 172–192 (IATSLALSLFATLLLLVLSIC). Topologically, residues 193 to 200 (SALSKRTP) are cytoplasmic.

It belongs to the Casparian strip membrane proteins (CASP) family. As to quaternary structure, homodimer and heterodimers.

The protein resides in the cell membrane. In Arabidopsis lyrata subsp. lyrata (Lyre-leaved rock-cress), this protein is CASP-like protein 1D2.